The primary structure comprises 392 residues: Protein O-glucosyltransferase 1 (392 aa).

The N-terminal stretch at 1–23 (MERRAGSRLRAWMLLLLLCPVQG) is a signal peptide. 4 disulfides stabilise this stretch: Cys49/Cys56, Cys54/Cys357, Cys102/Cys108, and Cys263/Cys286. Asn53 is a glycosylation site (N-linked (GlcNAc...) asparagine). The interaction with the consensus sequence C-X-S-X-[PA]-C in peptide substrates stretch occupies residues 103–107 (MFPSR). Residue Asp133 is the Proton donor/acceptor of the active site. The interaction with the consensus sequence C-X-S-X-[PA]-C in peptide substrates stretch occupies residues 172-178 (AVWPLYP). UDP-alpha-D-glucose is bound at residue Tyr177. N-linked (GlcNAc...) asparagine glycosylation is present at Asn204. UDP-alpha-D-glucose contacts are provided by residues Ser212, Arg218, and 274–279 (VAASFR). A glycan (N-linked (GlcNAc...) asparagine) is linked at Asn373. The Prevents secretion from ER signature appears at 389–392 (KTEL).

It belongs to the glycosyltransferase 90 family. As to expression, widely expressed in newborn and adult tissues (at protein level).

Its subcellular location is the endoplasmic reticulum lumen. The enzyme catalyses L-seryl-[EGF-like domain protein] + UDP-alpha-D-xylose = 3-O-(beta-D-xylosyl)-L-seryl-[EGF-like domain protein] + UDP + H(+). The catalysed reaction is L-seryl-[EGF-like domain protein] + UDP-alpha-D-glucose = 3-O-(beta-D-glucosyl)-L-seryl-[EGF-like domain protein] + UDP + H(+). It functions in the pathway protein modification; protein glycosylation. Functionally, dual specificity glycosyltransferase that catalyzes the transfer of glucose and xylose from UDP-glucose and UDP-xylose, respectively, to a serine residue found in the consensus sequence of C-X-S-X-P-C. Specifically targets extracellular EGF repeats of protein such as CRB2, F7, F9 and NOTCH2. Acts as a positive regulator of Notch signaling by mediating O-glucosylation of Notch, leading to regulate muscle development. Notch glucosylation does not affect Notch ligand binding. Required during early development to promote gastrulation: acts by mediating O-glucosylation of CRB2, which is required for CRB2 localization to the cell membrane. The polypeptide is Protein O-glucosyltransferase 1 (Mus musculus (Mouse)).